A 394-amino-acid chain; its full sequence is Elongation factor Tu (394 aa).

Residues 10 to 204 form the tr-type G domain; sequence KPHVNVGTIG…ALDTYIPEPE (195 aa). A G1 region spans residues 19 to 26; sequence GHVDHGKT. 19–26 provides a ligand contact to GTP; the sequence is GHVDHGKT. Position 26 (Thr-26) interacts with Mg(2+). Positions 60–64 are G2; sequence GITIN. The interval 81-84 is G3; the sequence is DCPG. GTP is bound by residues 81-85 and 136-139; these read DCPGH and NKCD. The interval 136–139 is G4; that stretch reads NKCD. The tract at residues 174-176 is G5; sequence SAL.

The protein belongs to the TRAFAC class translation factor GTPase superfamily. Classic translation factor GTPase family. EF-Tu/EF-1A subfamily. As to quaternary structure, monomer.

Its subcellular location is the cytoplasm. The catalysed reaction is GTP + H2O = GDP + phosphate + H(+). In terms of biological role, GTP hydrolase that promotes the GTP-dependent binding of aminoacyl-tRNA to the A-site of ribosomes during protein biosynthesis. The polypeptide is Elongation factor Tu (Shewanella denitrificans (strain OS217 / ATCC BAA-1090 / DSM 15013)).